The chain runs to 124 residues: Darcynin homolog (124 aa).

This sequence belongs to the darcynin family.

The sequence is that of Darcynin homolog from Granulibacter bethesdensis (strain ATCC BAA-1260 / CGDNIH1).